A 20-amino-acid chain; its full sequence is MALNLQDKQAIVAEVSEVAK.

Belongs to the universal ribosomal protein uL10 family. In terms of assembly, part of the ribosomal stalk of the 50S ribosomal subunit. The N-terminus interacts with L11 and the large rRNA to form the base of the stalk. The C-terminus forms an elongated spine to which L12 dimers bind in a sequential fashion forming a multimeric L10(L12)X complex.

Functionally, forms part of the ribosomal stalk, playing a central role in the interaction of the ribosome with GTP-bound translation factors. The chain is Large ribosomal subunit protein uL10 (rplJ) from Citrobacter freundii.